The chain runs to 70 residues: uncharacterized protein (70 aa).

This is an uncharacterized protein from Escherichia coli O157:H7.